Consider the following 65-residue polypeptide: Keratin-associated protein 20-2 (65 aa).

The protein belongs to the KRTAP type 20 family. As to quaternary structure, interacts with hair keratins.

In the hair cortex, hair keratin intermediate filaments are embedded in an interfilamentous matrix, consisting of hair keratin-associated proteins (KRTAP), which are essential for the formation of a rigid and resistant hair shaft through their extensive disulfide bond cross-linking with abundant cysteine residues of hair keratins. The matrix proteins include the high-sulfur and high-glycine-tyrosine keratins. This chain is Keratin-associated protein 20-2 (KRTAP20-2), found in Homo sapiens (Human).